We begin with the raw amino-acid sequence, 457 residues long: Biphenyl dioxygenase subunit alpha (457 aa).

The region spanning 58-174 (WLMLGHETHI…VETYKGLVFA (117 aa)) is the Rieske domain. Residues Cys100, His102, Cys120, and His123 each coordinate [2Fe-2S] cluster. Positions 233 and 239 each coordinate Fe cation.

The protein belongs to the bacterial ring-hydroxylating dioxygenase alpha subunit family. In terms of assembly, heterohexamer consisting of three BphA subunits and three BphE subunits. A ferredoxin (BphF) and a ferredoxin reductase (BphG) must be present to obtain activity. Requires [2Fe-2S] cluster as cofactor. Fe cation serves as cofactor.

It carries out the reaction biphenyl + NADH + O2 + H(+) = (2R,3S)-3-phenylcyclohexa-3,5-diene-1,2-diol + NAD(+). The protein operates within xenobiotic degradation; biphenyl degradation; 2-hydroxy-2,4-pentadienoate and benzoate from biphenyl: step 1/4. This is Biphenyl dioxygenase subunit alpha (bphA) from Comamonas testosteroni (Pseudomonas testosteroni).